The following is a 553-amino-acid chain: Glutamyl-tRNA(Gln) amidotransferase subunit B, mitochondrial (553 aa).

The transit peptide at 1-18 (MAASTSGYSGVLFRLRKY) directs the protein to the mitochondrion.

This sequence belongs to the GatB/GatE family. GatB subfamily. Subunit of the heterotrimeric GatCAB amidotransferase (AdT) complex, composed of A (qrsl1), B (gatb) and C (gatc) subunits.

The protein localises to the mitochondrion. The enzyme catalyses L-glutamyl-tRNA(Gln) + L-glutamine + ATP + H2O = L-glutaminyl-tRNA(Gln) + L-glutamate + ADP + phosphate + H(+). Functionally, allows the formation of correctly charged Gln-tRNA(Gln) through the transamidation of misacylated Glu-tRNA(Gln) in the mitochondria. The reaction takes place in the presence of glutamine and ATP through an activated gamma-phospho-Glu-tRNA(Gln). The chain is Glutamyl-tRNA(Gln) amidotransferase subunit B, mitochondrial from Danio rerio (Zebrafish).